Consider the following 119-residue polypeptide: Large ribosomal subunit protein bL20 (119 aa).

The protein belongs to the bacterial ribosomal protein bL20 family.

Binds directly to 23S ribosomal RNA and is necessary for the in vitro assembly process of the 50S ribosomal subunit. It is not involved in the protein synthesizing functions of that subunit. The chain is Large ribosomal subunit protein bL20 from Rhodopseudomonas palustris (strain HaA2).